The sequence spans 478 residues: Glucose-6-phosphate 1-dehydrogenase (478 aa).

NADP(+) contacts are provided by residues R48, 86-87, and K142; that span reads DF. Substrate-binding residues include H172, K176, E210, and D229. The active-site Proton acceptor is the H234. Substrate is bound by residues K334 and K339.

It belongs to the glucose-6-phosphate dehydrogenase family.

The catalysed reaction is D-glucose 6-phosphate + NADP(+) = 6-phospho-D-glucono-1,5-lactone + NADPH + H(+). The protein operates within carbohydrate degradation; pentose phosphate pathway; D-ribulose 5-phosphate from D-glucose 6-phosphate (oxidative stage): step 1/3. Functionally, catalyzes the oxidation of glucose 6-phosphate to 6-phosphogluconolactone. This Borreliella burgdorferi (strain ATCC 35210 / DSM 4680 / CIP 102532 / B31) (Borrelia burgdorferi) protein is Glucose-6-phosphate 1-dehydrogenase.